The primary structure comprises 65 residues: Large ribosomal subunit protein bL35 (65 aa).

A disordered region spans residues 1 to 26 (MPKMKTHRGAAKRFKKTGSGKLKRAK).

It belongs to the bacterial ribosomal protein bL35 family.

In Clostridium novyi (strain NT), this protein is Large ribosomal subunit protein bL35.